Here is a 794-residue protein sequence, read N- to C-terminus: DNA ligase (794 aa).

Residues 35 to 39 (DAEYD), 84 to 85 (SL), and Glu126 each bind NAD(+). Residue Lys128 is the N6-AMP-lysine intermediate of the active site. 4 residues coordinate NAD(+): Arg149, Glu186, Lys302, and Lys326. Positions 420, 423, 450, and 456 each coordinate Zn(2+). Residues 711–794 (VEGLPLAGQT…KLLDEYGVAH (84 aa)) enclose the BRCT domain.

Belongs to the NAD-dependent DNA ligase family. LigA subfamily. Mg(2+) is required as a cofactor. It depends on Mn(2+) as a cofactor.

It catalyses the reaction NAD(+) + (deoxyribonucleotide)n-3'-hydroxyl + 5'-phospho-(deoxyribonucleotide)m = (deoxyribonucleotide)n+m + AMP + beta-nicotinamide D-nucleotide.. In terms of biological role, DNA ligase that catalyzes the formation of phosphodiester linkages between 5'-phosphoryl and 3'-hydroxyl groups in double-stranded DNA using NAD as a coenzyme and as the energy source for the reaction. It is essential for DNA replication and repair of damaged DNA. The polypeptide is DNA ligase (Pseudomonas paraeruginosa (strain DSM 24068 / PA7) (Pseudomonas aeruginosa (strain PA7))).